A 614-amino-acid polypeptide reads, in one-letter code: MSDQESVVSFNSQNTSMVDVEGQQPQQYVPSKTNSRANQLKLTKTETVKSLQDLGVTSAAPVPDINAPQTAKNNIFPEEYTMETPSGLVPVATLQSMGRTASALSRTRTKQLNRTATNSSSTGKEEMEEEETEEREDQSGENELDPEIEFVTFVTGDPENPHNWPSWVRWSYTVLLSILVICVAYGSACISGGLGTVEKKYHVGMEAAILSCSLMVIGFSLGPLIWSPVSDLYGRRVAYFVSMGLYVIFNIPCALAPNLGCLLACRFLCGVWSSSGLCLVGGSIADMFPSETRGKAIAFFAFAPYVGPVVGPLVNGFISVSTGRMDLIFWVNMAFAGVMWIISSAIPETYAPVILKRKAARLRKETGNPKIMTEQEAQGVSMSEMMRACLLRPLYFAVTEPVLVATCFYVCLIYSLLYAFFFAFPVIFGELYGYKDNLVGLMFIPIVIGALWALATTFYCENKYLQIVKQRKPTPEDRLLGAKIGAPFAAIALWILGATAYKHIIWVGPASAGLAFGFGMVLIYYSLNNYIIDCYVQYASSALATKVFLRSAGGAAFPLFTIQMYHKLNLHWGSWLLAFISTAMIALPFAFSYWGKGLRHKLSKKDYSIDSVEM.

A disordered region spans residues Met-1 to Leu-40. The Cytoplasmic segment spans residues Met-1–Thr-173. Ser-50 carries the post-translational modification Phosphoserine. The span at Arg-99 to Thr-122 shows a compositional bias: polar residues. The segment at Arg-99–Leu-144 is disordered. Over residues Glu-126 to Leu-144 the composition is skewed to acidic residues. Residues Val-174 to Leu-194 traverse the membrane as a helical segment. Over Gly-195–Glu-206 the chain is Extracellular. The chain crosses the membrane as a helical span at residues Ala-207–Ser-227. Residues Pro-228–Arg-236 lie on the Cytoplasmic side of the membrane. The chain crosses the membrane as a helical span at residues Val-237–Pro-257. Topologically, residues Asn-258–Arg-266 are extracellular. Residues Phe-267–Met-287 form a helical membrane-spanning segment. The Cytoplasmic portion of the chain corresponds to Phe-288–Ile-297. The helical transmembrane segment at Ala-298–Ile-318 threads the bilayer. The Extracellular portion of the chain corresponds to Ser-319–Asp-326. A helical transmembrane segment spans residues Leu-327 to Pro-347. At Glu-348–Cys-407 the chain is on the cytoplasmic side. The chain crosses the membrane as a helical span at residues Phe-408–Phe-428. Residues Gly-429–Asn-437 are Extracellular-facing. A helical transmembrane segment spans residues Leu-438–Phe-458. The Cytoplasmic portion of the chain corresponds to Tyr-459–Arg-478. Residues Leu-479–Thr-499 traverse the membrane as a helical segment. The Extracellular segment spans residues Ala-500–His-503. Residues Ile-504 to Tyr-524 form a helical membrane-spanning segment. The Cytoplasmic segment spans residues Tyr-525 to Ser-541. Residues Ala-542–Ile-562 form a helical membrane-spanning segment. At Gln-563–Ser-574 the chain is on the extracellular side. A helical transmembrane segment spans residues Trp-575–Gly-595. The Cytoplasmic portion of the chain corresponds to Lys-596–Met-614.

This sequence belongs to the major facilitator superfamily. DHA1 family. Polyamines/proton antiporter (TC 2.A.1.2.16) subfamily.

The protein localises to the cell membrane. Its function is as follows. Cell membrane polyamine/proton antiporter, involved in the detoxification of excess polyamines in the cytoplasm. Recognizes spermine, but not spermidine. The protein is Polyamine transporter 2 (TPO2) of Saccharomyces cerevisiae (strain ATCC 204508 / S288c) (Baker's yeast).